Consider the following 144-residue polypeptide: Actin-associated protein FAM107A (144 aa).

Residues 66-112 adopt a coiled-coil conformation; that stretch reads ELQRVLEHRRRNQLIKKKKEELEAKRLQCPFEQELLRRQQRLNQLEK. Positions 74-84 match the Nuclear localization signal motif; it reads RRRNQLIKKKK. Residues 105 to 124 are disordered; the sequence is QRLNQLEKPPEKEEDHAPEF. The span at 112-124 shows a compositional bias: basic and acidic residues; it reads KPPEKEEDHAPEF.

Belongs to the FAM107 family. As to quaternary structure, interacts with ACTB. Interacts with COMMD1; this interaction stabilizes COMMD1 in the nucleus. Interacts with MAP1A. Interacts with PRDX1. Interacts with F-actin. As to expression, widely expressed. Expressed in neurons. Expressed in malignant glial tumors. Expression is reduced or absent in a number of cancer cell lines.

Its subcellular location is the nucleus. The protein resides in the cytoplasm. The protein localises to the cytoskeleton. It is found in the stress fiber. It localises to the cell junction. Its subcellular location is the focal adhesion. The protein resides in the cell projection. The protein localises to the ruffle membrane. It is found in the synapse. Functionally, stress-inducible actin-binding protein that plays a role in synaptic and cognitive functions by modulating actin filamentous (F-actin) dynamics. Mediates polymerization of globular actin to F-actin. Also binds to, stabilizes and bundles F-actin. Involved in synaptic function by regulating neurite outgrowth in an actin-dependent manner and for the acquisition of hippocampus-dependent cognitive function, such as learning and long-term memory. Plays a role in the actin and microtubule cytoskeleton organization; negatively regulates focal adhesion (FA) assembly promoting malignant glial cell migration in an actin-, microtubule- and MAP1A-dependent manner. Also involved in neuroblastoma G1/S phase cell cycle progression and cell proliferation inhibition by stimulating ubiquitination of NF-kappa-B subunit RELA and NF-kappa-B degradation in a COMMD1- and actin-dependent manner. May play a role in tumor development. The polypeptide is Actin-associated protein FAM107A (Homo sapiens (Human)).